A 382-amino-acid polypeptide reads, in one-letter code: Sphingosine kinase 1 (382 aa).

A DAGKc domain is found at 12 to 159 (PRPCRVLVLL…MNLLSLHTAS (148 aa)). ATP-binding positions include 22–24 (NPQ) and 54–58 (TERKN). 79–82 (SGDG) provides a ligand contact to substrate. Aspartate 81 functions as the Proton donor/acceptor in the catalytic mechanism. ATP-binding positions include glutamate 86 and 111 to 113 (GSG). 2 short sequence motifs (nuclear export signal) span residues 147–155 (LSPMNLLSL) and 161–169 (LRLYSVLSL). Aspartate 178 serves as a coordination point for substrate. Arginine 185 and arginine 191 together coordinate ATP. Phosphothreonine is present on threonine 193. Serine 225 carries the post-translational modification Phosphoserine. An ATP-binding site is contributed by 340 to 342 (DGE).

As to quaternary structure, interacts with ACY1. Binds to calmodulin. Interacts with SPHKAP. Interacts with CIB1, the interaction occurs in a calcium-dependent manner. Interacts with TRAF2. Interacts with EEF1A1; the interaction enhances SPHK1 kinase activity. Mg(2+) is required as a cofactor. Widely expressed. Expressed in brain (at protein level). Detected in neurons.

It is found in the cytoplasm. The protein localises to the endosome membrane. Its subcellular location is the nucleus. The protein resides in the cell membrane. It localises to the synapse. The enzyme catalyses a sphingoid base + ATP = a sphingoid 1-phosphate + ADP + H(+). It carries out the reaction L-seryl-[protein] + acetyl-CoA = O-acetyl-L-seryl-[protein] + CoA. It catalyses the reaction sphinganine + ATP = sphinganine 1-phosphate + ADP + H(+). The catalysed reaction is sphing-4-enine + ATP = sphing-4-enine 1-phosphate + ADP + H(+). The enzyme catalyses 1-O-hexadecyl-2-amino-sn-glycerol + ATP = 1-O-hexadecyl-2-desoxy-2-amino-sn-glycero-3-phosphate + ADP + H(+). Its activity is regulated as follows. Acetyltransferase activity increases in presence of the kinase substrate, sphingosine. In Purkinje cells, kinase activity on sphingosine increases in presence of VEGFA. In neurons, kinase activity increases during the first 24h in presence of Amyloid-beta protein 42 to decrease after 96h. Catalyzes the phosphorylation of sphingosine to form sphingosine 1-phosphate (SPP), a lipid mediator with both intra- and extracellular functions. Also acts on D-erythro-sphingosine and to a lesser extent sphinganine, but not other lipids, such as D,L-threo-dihydrosphingosine, N,N-dimethylsphingosine, diacylglycerol, ceramide, or phosphatidylinositol. In contrast to proapoptotic SPHK2, has a negative effect on intracellular ceramide levels, enhances cell growth and inhibits apoptosis. Involved in the regulation of inflammatory response and neuroinflammation. Via the product sphingosine 1-phosphate, stimulates TRAF2 E3 ubiquitin ligase activity, and promotes activation of NF-kappa-B in response to TNF signaling. In response to TNF and in parallel to NF-kappa-B activation, negatively regulates RANTES induction through p38 MAPK signaling pathway. Involved in endocytic membrane trafficking induced by sphingosine, recruited to dilate endosomes, also plays a role on later stages of endosomal maturation and membrane fusion independently of its kinase activity. In Purkinje cells, seems to be also involved in the regulation of autophagosome-lysosome fusion upon VEGFA. Functionally, has serine acetyltransferase activity on PTGS2/COX2 in an acetyl-CoA dependent manner. The acetyltransferase activity increases in presence of the kinase substrate, sphingosine. During neuroinflammation, through PTGS2 acetylation, promotes neuronal secretion of specialized preresolving mediators (SPMs), especially 15-R-lipoxin A4, which results in an increase of phagocytic microglia. The chain is Sphingosine kinase 1 from Mus musculus (Mouse).